A 776-amino-acid chain; its full sequence is Calcium-independent phospholipase A2-gamma (776 aa).

Composition is skewed to basic and acidic residues over residues 226-238 (RQLQDKPCLEESK) and 307-331 (LKSDPKSQPEEEEEPSKTDEPICKD). Disordered regions lie at residues 226–274 (RQLQ…EALP) and 306–331 (KLKSDPKSQPEEEEEPSKTDEPICKD). Positions 439-634 (LAIDGGGTRG…LLNNPSALAL (196 aa)) constitute a PNPLA domain. Residues 443–448 (GGGTRG) carry the GXGXXG motif. A helical transmembrane segment spans residues 469–489 (LFDYICGVSTGAILAFMLGLF). The short motif at 475 to 479 (GVSTG) is the GXSXG element. Serine 477 functions as the Nucleophile in the catalytic mechanism. The active-site Proton acceptor is the aspartate 621. The DGA/G signature appears at 621–623 (DGG). Position 730 is an N6-succinyllysine (lysine 730).

The protein localises to the endoplasmic reticulum membrane. The protein resides in the microsome membrane. It localises to the mitochondrion membrane. It is found in the peroxisome membrane. It catalyses the reaction a 1,2-diacyl-sn-glycero-3-phosphocholine + H2O = a 1-acyl-sn-glycero-3-phosphocholine + a fatty acid + H(+). The catalysed reaction is a 1,2-diacyl-sn-glycero-3-phosphocholine + H2O = a 2-acyl-sn-glycero-3-phosphocholine + a fatty acid + H(+). It carries out the reaction a 1,2-diacyl-sn-glycero-3-phosphoethanolamine + H2O = a 1-acyl-sn-glycero-3-phosphoethanolamine + a fatty acid + H(+). The enzyme catalyses a 1-O-(1Z-alkenyl)-2-acyl-sn-glycero-3-phosphocholine + H2O = a 1-O-(1Z-alkenyl)-sn-glycero-3-phosphocholine + a fatty acid + H(+). It catalyses the reaction a 1-acyl-sn-glycero-3-phosphocholine + H2O = sn-glycerol 3-phosphocholine + a fatty acid + H(+). The catalysed reaction is 1-acyl-2-(9Z,12Z)-octadecadienoyl-sn-glycero-3-phosphocholine + H2O = a 1-acyl-sn-glycero-3-phosphocholine + (9Z,12Z)-octadecadienoate + H(+). It carries out the reaction 1-acyl-2-(5Z,8Z,11Z,14Z-eicosatetraenoyl)-sn-glycero-3-phosphocholine + H2O = a 1-acyl-sn-glycero-3-phosphocholine + (5Z,8Z,11Z,14Z)-eicosatetraenoate + H(+). The enzyme catalyses 1-hexadecanoyl-2-(5Z,8Z,11Z,14Z-eicosatetraenoyl)-sn-glycero-3-phosphocholine + H2O = 1-hexadecanoyl-sn-glycero-3-phosphocholine + (5Z,8Z,11Z,14Z)-eicosatetraenoate + H(+). It catalyses the reaction 1-octadecanoyl-2-(9Z-octadecenoyl)-sn-glycero-3-phosphocholine + H2O = 1-octadecanoyl-sn-glycero-3-phosphocholine + (9Z)-octadecenoate + H(+). The catalysed reaction is 1-hexadecanoyl-2-(9Z-octadecenoyl)-sn-glycero-3-phosphocholine + H2O = 1-hexadecanoyl-sn-glycero-3-phosphocholine + (9Z)-octadecenoate + H(+). It carries out the reaction 1-hexadecanoyl-2-(9Z,12Z-octadecadienoyl)-sn-glycero-3-phosphocholine + H2O = (9Z,12Z)-octadecadienoate + 1-hexadecanoyl-sn-glycero-3-phosphocholine + H(+). The enzyme catalyses 1-acyl-2-(9Z,12Z)-octadecadienoyl-sn-glycero-3-phosphoethanolamine + H2O = a 1-acyl-sn-glycero-3-phosphoethanolamine + (9Z,12Z)-octadecadienoate + H(+). It catalyses the reaction 1-acyl-2-(5Z,8Z,11Z,14Z)-eicosatetraenoyl-sn-glycero-3-phosphoethanolamine + H2O = a 1-acyl-sn-glycero-3-phosphoethanolamine + (5Z,8Z,11Z,14Z)-eicosatetraenoate + H(+). The catalysed reaction is 1-hexadecanoyl-2-(5Z,8Z,11Z,14Z-eicosatetraenoyl)-sn-glycero-3-phosphoethanolamine + H2O = 1-hexadecanoyl-sn-glycero-3-phosphoethanolamine + (5Z,8Z,11Z,14Z)-eicosatetraenoate + H(+). It carries out the reaction 1-hexadecanoyl-2-(5Z,8Z,11Z,14Z-eicosatetraenoyl)-sn-glycero-3-phosphocholine + H2O = 2-(5Z,8Z,11Z,14Z)-eicosatetraenoyl-sn-glycero-3-phosphocholine + hexadecanoate + H(+). The enzyme catalyses 1-octadecanoyl-2-(9Z-octadecenoyl)-sn-glycero-3-phosphocholine + H2O = 2-(9Z-octadecenoyl)-sn-glycero-3-phosphocholine + octadecanoate + H(+). It catalyses the reaction 1-hexadecanoyl-2-(4Z,7Z,10Z,13Z,16Z,19Z-docosahexaenoyl)-sn-glycero-3-phosphocholine + H2O = 2-(4Z,7Z,10Z,13Z,16Z,19Z-docosahexaenoyl)-sn-glycero-3-phosphocholine + hexadecanoate + H(+). The catalysed reaction is 1-O-(1Z)-hexadecenyl-2 (5Z,8Z,11Z,14Z)-eicosatetraenoyl-sn-glycero-3-phosphocholine + H2O = 1-(1Z-hexadecenyl)-sn-glycero-3-phosphocholine + (5Z,8Z,11Z,14Z)-eicosatetraenoate + H(+). It carries out the reaction 1-O-(1Z-hexadecenyl)-2-(9Z-octadecenoyl)-sn-glycero-3-phosphocholine + H2O = 1-(1Z-hexadecenyl)-sn-glycero-3-phosphocholine + (9Z)-octadecenoate + H(+). The enzyme catalyses 1-hexadecanoyl-sn-glycero-3-phosphocholine + H2O = sn-glycerol 3-phosphocholine + hexadecanoate + H(+). It catalyses the reaction 1',3'-bis-[1,2-di-(9Z,12Z-octadecadienoyl)-sn-glycero-3-phospho]-glycerol + H2O = 1'-[1,2-di-(9Z,12Z-octadecadienoyl)-sn-glycero-3-phospho]-3'-[1-(9Z,12Z-octadecadienoyl)-sn-glycero-3-phospho]-glycerol + (9Z,12Z)-octadecadienoate + H(+). The catalysed reaction is 1'-[1-acyl-2-(9-hydroxy-(10E,12Z)-octadecadienoyl)-sn-glycero-3-phospho]-3'-[1,2-diacyl-sn-glycero-3-phospho]-glycerol + H2O = 9-hydroxy-(10E,12Z)-octadecadienoate + 1'-[1,2-diacyl-sn-glycero-3-phospho],3'-[1-acyl-sn-glycero-3-phospho]-glycerol + H(+). The protein operates within phospholipid metabolism. Its activity is regulated as follows. Calcium-independent phospholipase. Its function is as follows. Calcium-independent and membrane-bound phospholipase, that catalyzes the esterolytic cleavage of fatty acids from glycerophospholipids to yield free fatty acids and lysophospholipids, hence regulating membrane physical properties and the release of lipid second messengers and growth factors. Hydrolyzes phosphatidylethanolamine, phosphatidylcholine and probably phosphatidylinositol with a possible preference for the former. Has also a broad substrate specificity in terms of fatty acid moieties, hydrolyzing saturated and mono-unsaturated fatty acids at nearly equal rates from either the sn-1 or sn-2 position in diacyl phosphatidylcholine. However, has a weak activity toward polyunsaturated fatty acids at the sn-2 position, and thereby favors the production of 2-arachidonoyl lysophosphatidylcholine, a key branch point metabolite in eicosanoid signaling. On the other hand, can produce arachidonic acid from the sn-1 position of diacyl phospholipid and from the sn-2 position of arachidonate-containing plasmalogen substrates. Therefore, plays an important role in the mobilization of arachidonic acid in response to cellular stimuli and the generation of lipid second messengers. Can also hydrolyze lysophosphatidylcholine. In the mitochondrial compartment, catalyzes the hydrolysis and release of oxidized aliphatic chains from cardiolipin and integrates mitochondrial bioenergetics and signaling. It is essential for maintaining efficient bioenergetic mitochondrial function through tailoring mitochondrial membrane lipid metabolism and composition. This is Calcium-independent phospholipase A2-gamma from Rattus norvegicus (Rat).